A 181-amino-acid chain; its full sequence is Bradykinin potentiating and C-type natriuretic peptides (181 aa).

The signal sequence occupies residues Met1–Gly23. A propeptide spanning residues Lys24–Gln27 is cleaved from the precursor. Residues Gln28 and Gln31 each carry the pyrrolidone carboxylic acid modification. A propeptide spanning residues Leu41–Val43 is cleaved from the precursor. The residue at position 44 (Gln44) is a Pyrrolidone carboxylic acid. A propeptide spanning residues Thr50–Leu52 is cleaved from the precursor. A Pyrrolidone carboxylic acid modification is found at Gln53. Positions Ala59 to Lys159 are excised as a propeptide. Positions Glu74–Ala150 are disordered. The segment covering Ser104–Ser114 has biased composition (low complexity). Positions Ala140–Ala150 are enriched in gly residues. Residues Cys165 and Cys181 are joined by a disulfide bond.

In the N-terminal section; belongs to the bradykinin-potentiating peptide family. The protein in the C-terminal section; belongs to the natriuretic peptide family. Venom gland.

The protein localises to the secreted. In terms of biological role, bradykinin-potentiating peptide both inhibits the activity of the angiotensin-converting enzyme (ACE) and enhances the action of bradykinin by inhibiting the peptidases that inactivate it. It acts as an indirect hypotensive agent. Synthetic Cdt1a, Cdt1b and the short hexapeptide Cdt3 are able to potentiate the hypotensive effect mediated by Bk on the blood pressure of anesthetized rats. Has a vasorelaxant activity in rat aortic strips and a diuretic potency in anesthetized rats. May act by activating natriuretic receptors (NPR1 and/or NPR2). The sequence is that of Bradykinin potentiating and C-type natriuretic peptides from Crotalus durissus terrificus (South American rattlesnake).